We begin with the raw amino-acid sequence, 371 residues long: Flagellar P-ring protein (371 aa).

The signal sequence occupies residues 1-25 (MTMRVCKWLLTFALLFAATLTPAHS).

Belongs to the FlgI family. As to quaternary structure, the basal body constitutes a major portion of the flagellar organelle and consists of four rings (L,P,S, and M) mounted on a central rod.

The protein localises to the periplasm. It is found in the bacterial flagellum basal body. In terms of biological role, assembles around the rod to form the L-ring and probably protects the motor/basal body from shearing forces during rotation. The polypeptide is Flagellar P-ring protein (Sinorhizobium fredii (strain NBRC 101917 / NGR234)).